The chain runs to 335 residues: Ferredoxin--NADP reductase (335 aa).

FAD contacts are provided by Asp35, Gln43, Tyr48, Ala88, Phe122, Asp287, and Ser328.

It belongs to the ferredoxin--NADP reductase type 2 family. In terms of assembly, homodimer. FAD is required as a cofactor.

It carries out the reaction 2 reduced [2Fe-2S]-[ferredoxin] + NADP(+) + H(+) = 2 oxidized [2Fe-2S]-[ferredoxin] + NADPH. The chain is Ferredoxin--NADP reductase from Thermus thermophilus (strain ATCC BAA-163 / DSM 7039 / HB27).